The following is a 236-amino-acid chain: Small ribosomal subunit protein uS3 (236 aa).

The region spanning 39–107 is the KH type-2 domain; the sequence is IRKFLKREMY…EVFINIKEAK (69 aa). Positions 214–229 are enriched in basic and acidic residues; the sequence is PEKKEESKSGDKEVRS. The segment at 214 to 236 is disordered; sequence PEKKEESKSGDKEVRSKSRRGRQ.

The protein belongs to the universal ribosomal protein uS3 family. As to quaternary structure, part of the 30S ribosomal subunit. Forms a tight complex with proteins S10 and S14.

Its function is as follows. Binds the lower part of the 30S subunit head. Binds mRNA in the 70S ribosome, positioning it for translation. The protein is Small ribosomal subunit protein uS3 of Helicobacter hepaticus (strain ATCC 51449 / 3B1).